Consider the following 510-residue polypeptide: ATP synthase subunit alpha (510 aa).

169–176 (GDRQTGKT) is a binding site for ATP.

This sequence belongs to the ATPase alpha/beta chains family. As to quaternary structure, F-type ATPases have 2 components, CF(1) - the catalytic core - and CF(0) - the membrane proton channel. CF(1) has five subunits: alpha(3), beta(3), gamma(1), delta(1), epsilon(1). CF(0) has three main subunits: a(1), b(2) and c(9-12). The alpha and beta chains form an alternating ring which encloses part of the gamma chain. CF(1) is attached to CF(0) by a central stalk formed by the gamma and epsilon chains, while a peripheral stalk is formed by the delta and b chains.

Its subcellular location is the cell inner membrane. It carries out the reaction ATP + H2O + 4 H(+)(in) = ADP + phosphate + 5 H(+)(out). Its function is as follows. Produces ATP from ADP in the presence of a proton gradient across the membrane. The alpha chain is a regulatory subunit. In Nitrobacter winogradskyi (strain ATCC 25391 / DSM 10237 / CIP 104748 / NCIMB 11846 / Nb-255), this protein is ATP synthase subunit alpha.